We begin with the raw amino-acid sequence, 339 residues long: tRNA N6-adenosine threonylcarbamoyltransferase (339 aa).

Fe cation-binding residues include H111 and H115. Substrate is bound by residues 139 to 143 (LVSGG), D172, G185, D189, and N280. Fe cation is bound at residue D308.

It belongs to the KAE1 / TsaD family. The cofactor is Fe(2+).

It is found in the cytoplasm. It catalyses the reaction L-threonylcarbamoyladenylate + adenosine(37) in tRNA = N(6)-L-threonylcarbamoyladenosine(37) in tRNA + AMP + H(+). In terms of biological role, required for the formation of a threonylcarbamoyl group on adenosine at position 37 (t(6)A37) in tRNAs that read codons beginning with adenine. Is involved in the transfer of the threonylcarbamoyl moiety of threonylcarbamoyl-AMP (TC-AMP) to the N6 group of A37, together with TsaE and TsaB. TsaD likely plays a direct catalytic role in this reaction. The protein is tRNA N6-adenosine threonylcarbamoyltransferase of Phocaeicola vulgatus (strain ATCC 8482 / DSM 1447 / JCM 5826 / CCUG 4940 / NBRC 14291 / NCTC 11154) (Bacteroides vulgatus).